Consider the following 218-residue polypeptide: Octanoyltransferase (218 aa).

A BPL/LPL catalytic domain is found at 30-212; sequence ENTADEIWLV…HFYNILGYNA (183 aa). Residues 69 to 76, 141 to 143, and 154 to 156 each bind substrate; these read RGGQITYH, SLG, and GLA. Cysteine 172 serves as the catalytic Acyl-thioester intermediate.

The protein belongs to the LipB family.

The protein resides in the cytoplasm. It catalyses the reaction octanoyl-[ACP] + L-lysyl-[protein] = N(6)-octanoyl-L-lysyl-[protein] + holo-[ACP] + H(+). Its pathway is protein modification; protein lipoylation via endogenous pathway; protein N(6)-(lipoyl)lysine from octanoyl-[acyl-carrier-protein]: step 1/2. Its function is as follows. Catalyzes the transfer of endogenously produced octanoic acid from octanoyl-acyl-carrier-protein onto the lipoyl domains of lipoate-dependent enzymes. Lipoyl-ACP can also act as a substrate although octanoyl-ACP is likely to be the physiological substrate. This chain is Octanoyltransferase, found in Actinobacillus pleuropneumoniae serotype 5b (strain L20).